The sequence spans 137 residues: Ribosome-binding factor A (137 aa).

The protein belongs to the RbfA family. In terms of assembly, monomer. Binds 30S ribosomal subunits, but not 50S ribosomal subunits or 70S ribosomes.

Its subcellular location is the cytoplasm. One of several proteins that assist in the late maturation steps of the functional core of the 30S ribosomal subunit. Associates with free 30S ribosomal subunits (but not with 30S subunits that are part of 70S ribosomes or polysomes). Required for efficient processing of 16S rRNA. May interact with the 5'-terminal helix region of 16S rRNA. The polypeptide is Ribosome-binding factor A (Allorhizobium ampelinum (strain ATCC BAA-846 / DSM 112012 / S4) (Agrobacterium vitis (strain S4))).